A 317-amino-acid chain; its full sequence is Methionyl-tRNA formyltransferase (317 aa).

Residue 109 to 112 (SLLP) coordinates (6S)-5,6,7,8-tetrahydrofolate.

Belongs to the Fmt family.

It catalyses the reaction L-methionyl-tRNA(fMet) + (6R)-10-formyltetrahydrofolate = N-formyl-L-methionyl-tRNA(fMet) + (6S)-5,6,7,8-tetrahydrofolate + H(+). Functionally, attaches a formyl group to the free amino group of methionyl-tRNA(fMet). The formyl group appears to play a dual role in the initiator identity of N-formylmethionyl-tRNA by promoting its recognition by IF2 and preventing the misappropriation of this tRNA by the elongation apparatus. This chain is Methionyl-tRNA formyltransferase, found in Halalkalibacterium halodurans (strain ATCC BAA-125 / DSM 18197 / FERM 7344 / JCM 9153 / C-125) (Bacillus halodurans).